Reading from the N-terminus, the 397-residue chain is MARGALDWIGAELVALDAKGLRRSLEPIGPAQGPVVRVGGRALVNLCSNDYLGLAADPRVRAAAADAAARFGAGSGAARLVAGDLPPHGALEARLAAWKGREAALLFGSGYHANAGVPGALVGRDDAVFSDVLNHASIVDGCLLSRAELVRYRHCDVEELAGLLARTRARRKLVVTDAIFSMDGDAAPLRELADLCDRHGAMLYVDEAHAAGVLGPGGAGLAEALGVQDRVDVHMGTLGKALGAFGAYVAGERRLVELLLSRARPFVFSTALPPPACAAALAALEVVATEPSRRTRLFALCARMQAGLARLGFDVARVASPIFPVVLGTEARALAAAAALRERGWFVRAIRPPTVPRGTSRLRVALSAAHDEAQVDGFLAALAEVLPGLPPEPRPPA.

Substrate is bound at residue arginine 23. 110 to 111 (GY) provides a ligand contact to pyridoxal 5'-phosphate. Histidine 135 serves as a coordination point for substrate. Positions 181, 209, and 237 each coordinate pyridoxal 5'-phosphate. Position 240 is an N6-(pyridoxal phosphate)lysine (lysine 240). Threonine 354 is a binding site for substrate.

The protein belongs to the class-II pyridoxal-phosphate-dependent aminotransferase family. BioF subfamily. In terms of assembly, homodimer. Requires pyridoxal 5'-phosphate as cofactor.

The enzyme catalyses 6-carboxyhexanoyl-[ACP] + L-alanine + H(+) = (8S)-8-amino-7-oxononanoate + holo-[ACP] + CO2. It functions in the pathway cofactor biosynthesis; biotin biosynthesis. Its function is as follows. Catalyzes the decarboxylative condensation of pimeloyl-[acyl-carrier protein] and L-alanine to produce 8-amino-7-oxononanoate (AON), [acyl-carrier protein], and carbon dioxide. The sequence is that of 8-amino-7-oxononanoate synthase from Anaeromyxobacter dehalogenans (strain 2CP-C).